The following is a 269-amino-acid chain: tRNA (guanine-N(7)-)-methyltransferase (269 aa).

Positions 1–38 (MDGVNDAANHTVESVPGRPSTASAPLEAGRRSPTGSRL) are disordered. S-adenosyl-L-methionine-binding residues include E91, E116, D143, and D166. The active site involves D166. Residues K170, D202, and 247 to 250 (TKFE) each bind substrate.

The protein belongs to the class I-like SAM-binding methyltransferase superfamily. TrmB family.

It carries out the reaction guanosine(46) in tRNA + S-adenosyl-L-methionine = N(7)-methylguanosine(46) in tRNA + S-adenosyl-L-homocysteine. It functions in the pathway tRNA modification; N(7)-methylguanine-tRNA biosynthesis. In terms of biological role, catalyzes the formation of N(7)-methylguanine at position 46 (m7G46) in tRNA. In Nocardia farcinica (strain IFM 10152), this protein is tRNA (guanine-N(7)-)-methyltransferase.